Reading from the N-terminus, the 125-residue chain is Small ribosomal subunit protein uS12m (125 aa).

Belongs to the universal ribosomal protein uS12 family.

It localises to the mitochondrion. Functionally, protein S12 is involved in the translation initiation step. The protein is Small ribosomal subunit protein uS12m (RPS12) of Helianthus annuus (Common sunflower).